The sequence spans 167 residues: uncharacterized protein (167 aa).

Positions 1–148 (MLIRVEIPID…SAFQVHRLAD (148 aa)) constitute an N-acetyltransferase domain.

Belongs to the acetyltransferase family.

This is an uncharacterized protein from Escherichia coli O157:H7.